Consider the following 99-residue polypeptide: MSKFTFKILWLENNIAIAIDYNIGNNKSPLTSYFFWPRNDAWEELKIELESKPWINKNEKVDLLNKTTEIINFWQEKEKNTSLRKAKEKFPEFNFIGTN.

The protein belongs to the chloroplast-specific ribosomal protein cS23 family. As to quaternary structure, part of the 30S ribosomal subunit.

Its subcellular location is the plastid. The protein resides in the chloroplast. Probably a ribosomal protein or a ribosome-associated protein. This is Small ribosomal subunit protein cS23 from Gracilaria tenuistipitata var. liui (Red alga).